The sequence spans 80 residues: Protein P9 (80 aa).

In terms of assembly, self-associates.

This chain is Protein P9, found in Beta vulgaris (Sugar beet).